The sequence spans 950 residues: UvrABC system protein A (950 aa).

36-43 (GKSGSGKS) provides a ligand contact to ATP. The C4-type zinc finger occupies 260 to 287 (CPLCGFSLPLIEPRLFSFNSPFGACSEC). 2 ABC transporter domains span residues 317-599 (FKTS…KNSL) and 619-947 (ADKG…MFLK). 651–658 (GVSGSGKS) serves as a coordination point for ATP. The segment at 750–776 (CEKCQGDGYLNIQMHFLPDVFVPCDLC) adopts a C4-type zinc-finger fold.

It belongs to the ABC transporter superfamily. UvrA family. As to quaternary structure, forms a heterotetramer with UvrB during the search for lesions.

The protein resides in the cytoplasm. In terms of biological role, the UvrABC repair system catalyzes the recognition and processing of DNA lesions. UvrA is an ATPase and a DNA-binding protein. A damage recognition complex composed of 2 UvrA and 2 UvrB subunits scans DNA for abnormalities. When the presence of a lesion has been verified by UvrB, the UvrA molecules dissociate. The chain is UvrABC system protein A from Borreliella burgdorferi (strain ATCC 35210 / DSM 4680 / CIP 102532 / B31) (Borrelia burgdorferi).